The primary structure comprises 227 residues: RNA-free ribonuclease P (227 aa).

The protein belongs to the HARP family.

It carries out the reaction Endonucleolytic cleavage of RNA, removing 5'-extranucleotides from tRNA precursor.. Functionally, RNA-free RNase P that catalyzes the removal of the 5'-leader sequence from pre-tRNA to produce the mature 5'-terminus. The protein is RNA-free ribonuclease P of Archaeoglobus fulgidus (strain ATCC 49558 / DSM 4304 / JCM 9628 / NBRC 100126 / VC-16).